Reading from the N-terminus, the 805-residue chain is Endonuclease MutS2 (805 aa).

344–351 (GPNGGGKT) lines the ATP pocket. The tract at residues 705 to 724 (RSRSEKLQAASEARPSAPPG) is disordered. Residues 729–804 (LDVRGLRVEE…GDAVTVVSLR (76 aa)) enclose the Smr domain.

Belongs to the DNA mismatch repair MutS family. MutS2 subfamily. In terms of assembly, homodimer. Binds to stalled ribosomes, contacting rRNA.

In terms of biological role, endonuclease that is involved in the suppression of homologous recombination and thus may have a key role in the control of bacterial genetic diversity. Acts as a ribosome collision sensor, splitting the ribosome into its 2 subunits. Detects stalled/collided 70S ribosomes which it binds and splits by an ATP-hydrolysis driven conformational change. Acts upstream of the ribosome quality control system (RQC), a ribosome-associated complex that mediates the extraction of incompletely synthesized nascent chains from stalled ribosomes and their subsequent degradation. Probably generates substrates for RQC. In Anaeromyxobacter sp. (strain Fw109-5), this protein is Endonuclease MutS2.